Reading from the N-terminus, the 562-residue chain is Protein wntless (562 aa).

At 1 to 13 (MSGTILENLSGRK) the chain is on the cytoplasmic side. Residues 14–34 (LSILVATLLLCQVLCFLLGGL) traverse the membrane as a helical segment. Over 35–239 (YAPLPAGHVT…AIHQNGGFTQ (205 aa)) the chain is Lumenal. Residue Asn-58 is glycosylated (N-linked (GlcNAc...) asparagine). The helical transmembrane segment at 240–260 (IWLLLKTMLFPFVVGIMIWFW) threads the bilayer. The Cytoplasmic portion of the chain corresponds to 261-270 (RRVHLLQRSP). A helical membrane pass occupies residues 271-291 (ALLEYMLIYLGAALTFLNLPL). Residues 292-311 (EYLSLVYEMPYMLLLSDIRQ) are Lumenal-facing. Residues 312-332 (GIFYAMLLTFWLVFAGEHMLI) form a helical membrane-spanning segment. Residues 333–344 (QDAPNKSTIRSR) are Cytoplasmic-facing. Residues 345–365 (YWKHLSAVVVGCISLFVFDIC) traverse the membrane as a helical segment. Residues 366-390 (ERGVQLRNPFYSIWTTPLGAKVAMT) are Lumenal-facing. The chain crosses the membrane as a helical span at residues 391–411 (FIVLAGVSAAIYFLFLCYMIW). Residues 412–441 (KVFRNIGDKRTSLPSMSQARRLHYEGLIYR) lie on the Cytoplasmic side of the membrane. A helical membrane pass occupies residues 442 to 462 (FKFLMLATLVCAALTVAGFIM). Residues 463-482 (GQMAEGQWDWNDNVAIQPTS) lie on the Lumenal side of the membrane. The helical transmembrane segment at 483 to 503 (AFLTGVYGMWNIYIFALLILY) threads the bilayer. Topologically, residues 504 to 562 (APSHKQWPAMHHSDETTQSNENIVASAASEEIEFSHLPSDSNPSEISSLTSFTRKVAFD) are cytoplasmic.

Belongs to the wntless family. In terms of assembly, interacts with wg; in the Golgi. Interacts with Vps35, a component of the retromer complex; wls stability is regulated by Vps35.

The protein localises to the presynaptic cell membrane. Its subcellular location is the postsynaptic cell membrane. It localises to the cell membrane. It is found in the endoplasmic reticulum membrane. The protein resides in the endosome membrane. The protein localises to the golgi apparatus membrane. A segment polarity gene required for wingless (wg)-dependent patterning processes, acting in both wg-sending cells and wg-target cells. In non-neuronal cells wls directs wg secretion. The wls traffic loop encompasses the Golgi, the cell surface, an endocytic compartment and a retrograde route leading back to the Golgi, and involves clathrin-mediated endocytosis and the retromer complex (a conserved protein complex consisting of Vps35 and Vps26). In neuronal cells (the larval motorneuron NMJ), the wg signal moves across the synapse via the release of wls-containing exosome-like vesicles. Postsynaptic wls is required for the trafficking of fz2 through the fz2-interacting protein Grip. The sequence is that of Protein wntless from Drosophila sechellia (Fruit fly).